The chain runs to 106 residues: UPF0145 protein Pfl01_1745 (106 aa).

The protein belongs to the UPF0145 family.

This Pseudomonas fluorescens (strain Pf0-1) protein is UPF0145 protein Pfl01_1745.